A 159-amino-acid polypeptide reads, in one-letter code: Putative pre-16S rRNA nuclease (159 aa).

It belongs to the YqgF nuclease family.

It is found in the cytoplasm. Could be a nuclease involved in processing of the 5'-end of pre-16S rRNA. In Synechococcus sp. (strain JA-3-3Ab) (Cyanobacteria bacterium Yellowstone A-Prime), this protein is Putative pre-16S rRNA nuclease.